The primary structure comprises 293 residues: D-alanine--D-alanine ligase (293 aa).

One can recognise an ATP-grasp domain in the interval 98–291; it reads KIIWKQHNLT…FNKLVVAIIN (194 aa). Residue 124–177 coordinates ATP; the sequence is DFPLPWMVKPTLEGSSIGISKVDSQIQLNNALMLAWQYNSHALIEQWIEGDEYT. Mg(2+) is bound by residues Asp-245, Glu-258, and Asn-260.

The protein belongs to the D-alanine--D-alanine ligase family. Requires Mg(2+) as cofactor. The cofactor is Mn(2+).

The protein localises to the cytoplasm. The enzyme catalyses 2 D-alanine + ATP = D-alanyl-D-alanine + ADP + phosphate + H(+). It functions in the pathway cell wall biogenesis; peptidoglycan biosynthesis. Cell wall formation. The polypeptide is D-alanine--D-alanine ligase (Ruthia magnifica subsp. Calyptogena magnifica).